A 338-amino-acid polypeptide reads, in one-letter code: Tetraacyldisaccharide 4'-kinase (338 aa).

Thr-65–Thr-72 lines the ATP pocket.

The protein belongs to the LpxK family.

It carries out the reaction a lipid A disaccharide + ATP = a lipid IVA + ADP + H(+). Its pathway is glycolipid biosynthesis; lipid IV(A) biosynthesis; lipid IV(A) from (3R)-3-hydroxytetradecanoyl-[acyl-carrier-protein] and UDP-N-acetyl-alpha-D-glucosamine: step 6/6. Functionally, transfers the gamma-phosphate of ATP to the 4'-position of a tetraacyldisaccharide 1-phosphate intermediate (termed DS-1-P) to form tetraacyldisaccharide 1,4'-bis-phosphate (lipid IVA). This is Tetraacyldisaccharide 4'-kinase from Paraburkholderia xenovorans (strain LB400).